Consider the following 132-residue polypeptide: 3-aminoacrylate deaminase RutC (132 aa).

The protein belongs to the RutC family.

It catalyses the reaction (Z)-3-aminoacrylate + H2O + H(+) = 3-oxopropanoate + NH4(+). Its function is as follows. Involved in pyrimidine catabolism. Catalyzes the deamination of 3-aminoacrylate to malonic semialdehyde, a reaction that can also occur spontaneously. RutC may facilitate the reaction and modulate the metabolic fitness, rather than catalyzing essential functions. This Cronobacter turicensis (strain DSM 18703 / CCUG 55852 / LMG 23827 / z3032) protein is 3-aminoacrylate deaminase RutC.